The following is a 505-amino-acid chain: Catalase (505 aa).

Catalysis depends on residues H56 and N129. Y339 serves as a coordination point for heme.

The protein belongs to the catalase family. Heme is required as a cofactor.

The protein localises to the cytoplasm. The enzyme catalyses 2 H2O2 = O2 + 2 H2O. In terms of biological role, decomposes hydrogen peroxide into water and oxygen; serves to protect cells from the toxic effects of hydrogen peroxide. In Helicobacter pylori (strain ATCC 700392 / 26695) (Campylobacter pylori), this protein is Catalase (katA).